Here is a 543-residue protein sequence, read N- to C-terminus: Cyclohexanone 1,2-monooxygenase (543 aa).

FAD contacts are provided by Phe-16, Asp-37, Trp-46, Asp-57, Tyr-63, and Val-110.

It belongs to the FAD-binding monooxygenase family. Requires FAD as cofactor.

It catalyses the reaction cyclohexanone + NADPH + O2 + H(+) = hexano-6-lactone + NADP(+) + H2O. The chain is Cyclohexanone 1,2-monooxygenase from Acinetobacter sp.